The sequence spans 127 residues: Histone H2B type 1-A (127 aa).

The disordered stretch occupies residues Met-1–Lys-32. Pro-2 bears the N-acetylproline mark. Residues Lys-7, Lys-13, Lys-14, Lys-17, Lys-18, Lys-22, and Lys-25 each carry the N6-acetyllysine; alternate modification. 8 positions are modified to N6-crotonyllysine; alternate: Lys-7, Lys-13, Lys-14, Lys-17, Lys-18, Lys-22, Lys-25, and Lys-36. Residues Lys-7 and Lys-13 each carry the N6-lactoyllysine; alternate modification. A Glycyl lysine isopeptide (Lys-Gly) (interchain with G-Cter in SUMO2); alternate cross-link involves residue Lys-7. An N6-lactoyllysine; alternate mark is found at Lys-17, Lys-18, Lys-22, and Lys-25. Lys-22 is covalently cross-linked (Glycyl lysine isopeptide (Lys-Gly) (interchain with G-Cter in SUMO2); alternate). Lys-36 is modified (N6-succinyllysine; alternate). Residue Lys-36 forms a Glycyl lysine isopeptide (Lys-Gly) (interchain with G-Cter in ubiquitin); alternate linkage. Residue Ser-38 is modified to Phosphoserine. Position 45 is an N6-lactoyllysine; alternate (Lys-45). Lys-48 is modified (N6-methyllysine). Residue Lys-59 is modified to N6,N6-dimethyllysine. Arg-81 carries the dimethylated arginine modification. Lys-87 carries the post-translational modification N6-acetyllysine; alternate. Residue Lys-87 is modified to N6-lactoyllysine; alternate. The residue at position 87 (Lys-87) is an N6,N6,N6-trimethyllysine; alternate. 2 positions are modified to omega-N-methylarginine: Arg-88 and Arg-94. Lys-110 is modified (N6-lactoyllysine; alternate). Residue Lys-110 is modified to N6-methyllysine. Thr-117 bears the Phosphothreonine mark. N6-lactoyllysine; alternate occurs at positions 118 and 122. Residues Lys-118 and Lys-122 each carry the N6-succinyllysine; alternate modification. Lys-118 is modified (N6-methylated lysine; alternate). Residue Lys-122 forms a Glycyl lysine isopeptide (Lys-Gly) (interchain with G-Cter in ubiquitin); alternate linkage.

It belongs to the histone H2B family. The nucleosome is a histone octamer containing two molecules each of H2A, H2B, H3 and H4 assembled in one H3-H4 heterotetramer and two H2A-H2B heterodimers. Monoubiquitination at Lys-36 by the MSL1/MSL2 dimer is required for histone H3 'Lys-4' (H3K4me) and 'Lys-79' (H3K79me) methylation and transcription activation at specific gene loci, such as HOXA9 and MEIS1 loci. Similarly, monoubiquitination of Lys-122 (H2BK120Ub) by the RNF20/40 complex gives a specific tag for epigenetic transcriptional activation and is also prerequisite for histone H3 'Lys-4' and 'Lys-79' methylation. It also functions cooperatively with the FACT dimer to stimulate elongation by RNA polymerase II. H2BK120Ub also acts as a regulator of mRNA splicing: deubiquitination by USP49 is required for efficient cotranscriptional splicing of a large set of exons. In terms of processing, crotonylation (Kcr) is specifically present in male germ cells and marks testis-specific genes in post-meiotic cells, including X-linked genes that escape sex chromosome inactivation in haploid cells. Crotonylation marks active promoters and enhancers and confers resistance to transcriptional repressors. It is also associated with post-meiotically activated genes on autosomes. Post-translationally, acetylated during spermatogenesis. Acetylated form is most abundant in spermatogonia compared to spermatocytes and round spermatids. Phosphorylated at Thr-117 in spermatogonia, spermatocytes and round spermatids. In terms of processing, methylated at Lys-118 in spermatogonia, spermatocytes and round spermatids. Post-translationally, lactylated in macrophages by EP300/P300 by using lactoyl-CoA directly derived from endogenous or exogenous lactate, leading to stimulates gene transcription. Testis. Expressed in pachytene spermatocytes during meiotic prophase I in the absence of any significant DNA synthesis.

The protein localises to the nucleus. It localises to the chromosome. In terms of biological role, variant histone specifically required to direct the transformation of dissociating nucleosomes to protamine in male germ cells. Entirely replaces classical histone H2B prior nucleosome to protamine transition and probably acts as a nucleosome dissociating factor that creates a more dynamic chromatin, facilitating the large-scale exchange of histones. Core component of nucleosome. Nucleosomes wrap and compact DNA into chromatin, limiting DNA accessibility to the cellular machineries which require DNA as a template. Histones thereby play a central role in transcription regulation, DNA repair, DNA replication and chromosomal stability. DNA accessibility is regulated via a complex set of post-translational modifications of histones, also called histone code, and nucleosome remodeling. The sequence is that of Histone H2B type 1-A from Rattus norvegicus (Rat).